Reading from the N-terminus, the 469-residue chain is Bile acid receptor (469 aa).

A Glycyl lysine isopeptide (Lys-Gly) (interchain with G-Cter in SUMO1) cross-link involves residue lysine 119. Residues 121-196 constitute a DNA-binding region (nuclear receptor); sequence DELCVVCGDR…MGMLAECLLT (76 aa). The segment at 124–144 adopts an NR C4-type zinc-finger fold; the sequence is CVVCGDRASGYHYNALTCEGC. Phosphoserine; by PKC/PRKCA is present on residues serine 132 and serine 151. Lysine 154 is subject to N6-acetyllysine; by EP300. The NR C4-type zinc finger occupies 160–184; sequence CKNGGNCVMDMYMRRKCQDCRLRKC. Residue lysine 203 is modified to N6-methyllysine; by SETD7. Lysine 210 is modified (N6-acetyllysine; by EP300). Positions 245–469 constitute an NR LBD domain; it reads DQQTLLDYIM…PLLCEIWDVQ (225 aa). Lysine 272 participates in a covalent cross-link: Glycyl lysine isopeptide (Lys-Gly) (interchain with G-Cter in SUMO1). Arginine 328 is a 3beta,7beta-dihydroxy-5beta-cholan-24-oate binding site. Chenodeoxycholate is bound by residues arginine 328, tyrosine 358, and tyrosine 366. Position 366 (tyrosine 366) interacts with 3beta,7beta-dihydroxy-5beta-cholan-24-oate. At threonine 439 the chain carries Phosphothreonine; by PKC/PRKCZ. Histidine 444 serves as a coordination point for chenodeoxycholate.

The protein belongs to the nuclear hormone receptor family. NR1 subfamily. Heterodimer with RXRA; the heterodimerization enhances the binding affinity for LXXLL motifs from coactivators. Binds DNA predominantly as a heterodimer with RXRA. After activation by agonist binding interacts with coactivators. Interacts with NCOA1, NCOA2, PPARGC1A, CARM1, SETD7, PRMT1, GPS2, SMARCA4 and MED1, EP300 and SMARCD1. Interacts with XRCC5 and XRCC6; decreasing NR1H4/FXR transactivation activity towards ABCB11/BSEP. Interacts with PAGR1 AND NCOA6; indicative for an association with an MLL2/MLL3 complex (ASCOM). In terms of processing, acetylated by EP300. Lys-210 as is the major acetylation site for EP300; the dynamicly regulated acetylation inhibits heterodimerization with RXRA and transactivation activity. Deacetylated by SIRT1. Methylation may increase transactivation of target genes. Post-translationally, phosphorylation by PKC/PRKCA increases transactivation activity by promoting association with PPARGC1A. In terms of processing, sumoylated upon ligand binding.

Its subcellular location is the nucleus. Its function is as follows. Ligand-activated transcription factor. Receptor for bile acids (BAs) such as chenodeoxycholic acid (CDCA), lithocholic acid, deoxycholic acid (DCA) and allocholic acid (ACA). Plays a essential role in BA homeostasis through the regulation of genes involved in BA synthesis, conjugation and enterohepatic circulation. Also regulates lipid and glucose homeostasis and is involved innate immune response. The FXR-RXR heterodimer binds predominantly to farnesoid X receptor response elements (FXREs) containing two inverted repeats of the consensus sequence 5'-AGGTCA-3' in which the monomers are spaced by 1 nucleotide (IR-1) but also to tandem repeat DR1 sites with lower affinity, and can be activated by either FXR or RXR-specific ligands. It is proposed that monomeric nuclear receptors such as NR5A2/LRH-1 bound to coregulatory nuclear responsive element (NRE) halfsites located in close proximity to FXREs modulate transcriptional activity. In the liver activates transcription of the corepressor NR0B2 thereby indirectly inhibiting CYP7A1 and CYP8B1 (involved in BA synthesis) implicating at least in part histone demethylase KDM1A resulting in epigenomic repression, and SLC10A1/NTCP (involved in hepatic uptake of conjugated BAs). Activates transcription of the repressor MAFG (involved in regulation of BA synthesis). Activates transcription of SLC27A5/BACS and BAAT (involved in BA conjugation), ABCB11/BSEP (involved in bile salt export) by directly recruiting histone methyltransferase CARM1, and ABCC2/MRP2 (involved in secretion of conjugated BAs) and ABCB4 (involved in secretion of phosphatidylcholine in the small intestine). Activates transcription of SLC27A5/BACS and BAAT (involved in BA conjugation), ABCB11/BSEP (involved in bile salt export) by directly recruiting histone methyltransferase CARM1, and ABCC2/MRP2 (involved in secretion of conjugated BAs) and ABCB4 (involved in secretion of phosphatidylcholine in the small intestine). In the intestine activates FGF19 expression and secretion leading to hepatic CYP7A1 repression. The function also involves the coordinated induction of hepatic KLB/beta-klotho expression. Regulates transcription of liver UGT2B4 and SULT2A1 involved in BA detoxification; binding to the UGT2B4 promoter seems to imply a monomeric transactivation independent of RXRA. Modulates lipid homeostasis by activating liver NR0B2/SHP-mediated repression of SREBF1 (involved in de novo lipogenesis), expression of PLTP (involved in HDL formation), SCARB1 (involved in HDL hepatic uptake), APOE, APOC1, APOC4, PPARA (involved in beta-oxidation of fatty acids), VLDLR and SDC1 (involved in the hepatic uptake of LDL and IDL remnants), and inhibiting expression of MTTP (involved in VLDL assembly). Increases expression of APOC2 (promoting lipoprotein lipase activity implicated in triglyceride clearance). Transrepresses APOA1 involving a monomeric competition with NR2A1 for binding to a DR1 element. Also reduces triglyceride clearance by inhibiting expression of ANGPTL3 and APOC3 (both involved in inhibition of lipoprotein lipase). Involved in glucose homeostasis by modulating hepatic gluconeogenesis through activation of NR0B2/SHP-mediated repression of respective genes. Modulates glycogen synthesis (inducing phosphorylation of glycogen synthase kinase-3). Modulates glucose-stimulated insulin secretion and is involved in insulin resistance. Involved in intestinal innate immunity. Plays a role in protecting the distal small intestine against bacterial overgrowth and preservation of the epithelial barrier. Down-regulates inflammatory cytokine expression in several types of immune cells including macrophages and mononuclear cells. Mediates trans-repression of TLR4-induced cytokine expression; the function seems to require its sumoylation and prevents N-CoR nuclear receptor corepressor clearance from target genes such as IL1B and NOS2. Involved in the TLR9-mediated protective mechanism in intestinal inflammation. Plays an anti-inflammatory role in liver inflammation; proposed to inhibit pro-inflammatory (but not antiapoptotic) NF-kappa-B signaling. The protein is Bile acid receptor (Nr1h4) of Rattus norvegicus (Rat).